Consider the following 830-residue polypeptide: Septin and tuftelin-interacting protein 1 homolog (830 aa).

A compositionally biased stretch (acidic residues) spans 1–17; sequence MEDDDGRESFEINDMDL. Disordered stretches follow at residues 1–122 and 196–244; these read MEDD…PKQN and AYGK…KGSW. Residues 153–199 form the G-patch domain; the sequence is NSNKIMKMMQAMGYKPGEGLGAQGQGIVEPVQAQLRKGRGAVGAYGK.

It belongs to the TFP11/STIP family. In terms of assembly, identified in the spliceosome C complex. Can assemble into large rod-like polymers. In terms of tissue distribution, detected in muscle cells from body, pharynx and vulva, in neurons from head and tail, in pharyngeal gland and in tail hypodermal cells.

It is found in the nucleus. Its function is as follows. May be involved in pre-mRNA splicing. Required for embryonic development and survival. This chain is Septin and tuftelin-interacting protein 1 homolog (stip-1), found in Caenorhabditis elegans.